The chain runs to 485 residues: Serine/threonine-protein kinase dst4 (485 aa).

Residues 21 to 278 (FRVLEVIGQG…AVDLLNHPFI (258 aa)) form the Protein kinase domain. ATP-binding positions include 27–35 (IGQGSFGVV) and Lys-50. The active-site Proton acceptor is the Asp-142. 3 disordered regions span residues 304-343 (RRKK…SAGL), 360-424 (VMRE…GSVV), and 436-485 (SMKL…NQDD). Positions 310–324 (EEEAEEAEEGDDYDD) are enriched in acidic residues. A compositionally biased stretch (low complexity) spans 370 to 393 (SNNGGTFIYNNNNNNSSKTSSSGT). 2 stretches are compositionally biased toward acidic residues: residues 406–417 (DDDDDDDIEEGG) and 450–468 (SSDE…EEGG). The span at 474 to 485 (VVYTKSPVNQDD) shows a compositional bias: polar residues.

The protein belongs to the protein kinase superfamily. STE Ser/Thr protein kinase family. STE20 subfamily. Mg(2+) is required as a cofactor.

It catalyses the reaction L-seryl-[protein] + ATP = O-phospho-L-seryl-[protein] + ADP + H(+). The enzyme catalyses L-threonyl-[protein] + ATP = O-phospho-L-threonyl-[protein] + ADP + H(+). In Dictyostelium discoideum (Social amoeba), this protein is Serine/threonine-protein kinase dst4.